Here is a 509-residue protein sequence, read N- to C-terminus: MLPTLKKSGRPRDARGRFIRHHERLPVSLADTRGALFVASEMADFIKAGGLGDVAAALPRALRHRYDVRVLIPGYRAVLERAGKVEIVGRVLAHAALPACDIGRIVQSDGLPIYILLSKELFERDGSPYVSTSGSEFEDNAIRFATLSHAAAQIAAGHAGLGWKPRLLHLNDWPCALAAGYVRWSGGTTPCLLTIHNLAYQGLVPYSMAAALGIPAERVAELEFYGQMSFLRGGIVNADHVNTVSVSYAKQITGPAQGCGLDRLLAGRAAKGALTGIVNGIDASWDPRTDEYLDSHFSVNQWQGRQANAAQVRKAFGLRESTGPLFAVVSRLVHQKGLDLICEVAPQIVAAGGQIAVIGGGEPEIERQVAELTRRYPGQVGAFIGFEEGLARRMFAGADFLLMPSRFEPCGLSQMYAQRFGCLPIAHATGGLIDTVDDGVTGFLFQHASVEALRRCLERAFRTFRLPSLLSAMRRAAMLRPSGWDVAGKKYLSLYEHTAATAPALATVS.

Lys47 contributes to the ADP-alpha-D-glucose binding site.

It belongs to the glycosyltransferase 1 family. Bacterial/plant glycogen synthase subfamily.

It carries out the reaction [(1-&gt;4)-alpha-D-glucosyl](n) + ADP-alpha-D-glucose = [(1-&gt;4)-alpha-D-glucosyl](n+1) + ADP + H(+). It participates in glycan biosynthesis; glycogen biosynthesis. Its function is as follows. Synthesizes alpha-1,4-glucan chains using ADP-glucose. The chain is Glycogen synthase from Xanthomonas euvesicatoria pv. vesicatoria (strain 85-10) (Xanthomonas campestris pv. vesicatoria).